The sequence spans 230 residues: Potassium/proton antiporter CemA (230 aa).

A run of 4 helical transmembrane segments spans residues leucine 7–phenylalanine 27, isoleucine 107–glycine 127, leucine 145–histidine 165, and phenylalanine 181–leucine 201.

The protein belongs to the CemA family.

The protein localises to the plastid. Its subcellular location is the chloroplast inner membrane. It catalyses the reaction K(+)(in) + H(+)(out) = K(+)(out) + H(+)(in). Functionally, contributes to K(+)/H(+) antiport activity by supporting proton efflux to control proton extrusion and homeostasis in chloroplasts in a light-dependent manner to modulate photosynthesis. Prevents excessive induction of non-photochemical quenching (NPQ) under continuous-light conditions. Indirectly promotes efficient inorganic carbon uptake into chloroplasts. The polypeptide is Potassium/proton antiporter CemA (Triticum aestivum (Wheat)).